The sequence spans 101 residues: NAD(P)H-quinone oxidoreductase subunit 4L, chloroplastic (101 aa).

3 helical membrane passes run 2–22 (IFQS…YGLL), 32–52 (MSLE…SNFV), and 61–81 (VLAL…LAII).

It belongs to the complex I subunit 4L family. As to quaternary structure, NDH is composed of at least 16 different subunits, 5 of which are encoded in the nucleus.

It localises to the plastid. The protein resides in the chloroplast thylakoid membrane. It carries out the reaction a plastoquinone + NADH + (n+1) H(+)(in) = a plastoquinol + NAD(+) + n H(+)(out). The enzyme catalyses a plastoquinone + NADPH + (n+1) H(+)(in) = a plastoquinol + NADP(+) + n H(+)(out). In terms of biological role, NDH shuttles electrons from NAD(P)H:plastoquinone, via FMN and iron-sulfur (Fe-S) centers, to quinones in the photosynthetic chain and possibly in a chloroplast respiratory chain. The immediate electron acceptor for the enzyme in this species is believed to be plastoquinone. Couples the redox reaction to proton translocation, and thus conserves the redox energy in a proton gradient. This chain is NAD(P)H-quinone oxidoreductase subunit 4L, chloroplastic, found in Nephroselmis olivacea (Green alga).